We begin with the raw amino-acid sequence, 596 residues long: Proline--tRNA ligase (596 aa).

Belongs to the class-II aminoacyl-tRNA synthetase family. ProS type 1 subfamily. In terms of assembly, homodimer.

The protein localises to the cytoplasm. It carries out the reaction tRNA(Pro) + L-proline + ATP = L-prolyl-tRNA(Pro) + AMP + diphosphate. Catalyzes the attachment of proline to tRNA(Pro) in a two-step reaction: proline is first activated by ATP to form Pro-AMP and then transferred to the acceptor end of tRNA(Pro). As ProRS can inadvertently accommodate and process non-cognate amino acids such as alanine and cysteine, to avoid such errors it has two additional distinct editing activities against alanine. One activity is designated as 'pretransfer' editing and involves the tRNA(Pro)-independent hydrolysis of activated Ala-AMP. The other activity is designated 'posttransfer' editing and involves deacylation of mischarged Ala-tRNA(Pro). The misacylated Cys-tRNA(Pro) is not edited by ProRS. This Prochlorococcus marinus (strain NATL1A) protein is Proline--tRNA ligase.